The sequence spans 406 residues: Argininosuccinate synthase (406 aa).

ATP is bound at residue 9 to 17; sequence AYSGGLDTS. Y86 provides a ligand contact to L-citrulline. G116 contributes to the ATP binding site. L-aspartate contacts are provided by T118, N122, and D123. Residue N122 coordinates L-citrulline. Residues R126, S174, S183, E259, and Y271 each coordinate L-citrulline.

Belongs to the argininosuccinate synthase family. Type 1 subfamily. Homotetramer.

The protein resides in the cytoplasm. The enzyme catalyses L-citrulline + L-aspartate + ATP = 2-(N(omega)-L-arginino)succinate + AMP + diphosphate + H(+). It participates in amino-acid biosynthesis; L-arginine biosynthesis; L-arginine from L-ornithine and carbamoyl phosphate: step 2/3. This Geobacillus kaustophilus (strain HTA426) protein is Argininosuccinate synthase.